The following is a 329-amino-acid chain: Putative glucose-6-phosphate 1-epimerase (329 aa).

A compositionally biased stretch (low complexity) spans 1–13 (MAAPAPAGAAASP). The tract at residues 1–20 (MAAPAPAGAAASPSPKPQLP) is disordered. Substrate is bound by residues Arg-82, Gln-100, and Arg-105. Residue His-183 is part of the active site. Residue Asp-228 coordinates substrate. Glu-287 is an active-site residue.

This sequence belongs to the glucose-6-phosphate 1-epimerase family.

It carries out the reaction alpha-D-glucose 6-phosphate = beta-D-glucose 6-phosphate. This chain is Putative glucose-6-phosphate 1-epimerase, found in Cenchrus ciliaris (Buffelgrass).